A 635-amino-acid polypeptide reads, in one-letter code: Threonine--tRNA ligase (635 aa).

The 61-residue stretch at 1-61 (MISIRLKDGS…KEDGCLELLD (61 aa)) folds into the TGS domain. A catalytic region spans residues 242 to 532 (DHRRLGRELG…LTEHFGGAFP (291 aa)). Zn(2+) contacts are provided by cysteine 333, histidine 384, and histidine 509.

Belongs to the class-II aminoacyl-tRNA synthetase family. In terms of assembly, homodimer. Zn(2+) is required as a cofactor.

Its subcellular location is the cytoplasm. It catalyses the reaction tRNA(Thr) + L-threonine + ATP = L-threonyl-tRNA(Thr) + AMP + diphosphate + H(+). Functionally, catalyzes the attachment of threonine to tRNA(Thr) in a two-step reaction: L-threonine is first activated by ATP to form Thr-AMP and then transferred to the acceptor end of tRNA(Thr). Also edits incorrectly charged L-seryl-tRNA(Thr). The sequence is that of Threonine--tRNA ligase from Syntrophomonas wolfei subsp. wolfei (strain DSM 2245B / Goettingen).